A 443-amino-acid polypeptide reads, in one-letter code: Probable glycine dehydrogenase (decarboxylating) subunit 1 (443 aa).

It belongs to the GcvP family. N-terminal subunit subfamily. In terms of assembly, the glycine cleavage system is composed of four proteins: P, T, L and H. In this organism, the P 'protein' is a heterodimer of two subunits.

It carries out the reaction N(6)-[(R)-lipoyl]-L-lysyl-[glycine-cleavage complex H protein] + glycine + H(+) = N(6)-[(R)-S(8)-aminomethyldihydrolipoyl]-L-lysyl-[glycine-cleavage complex H protein] + CO2. In terms of biological role, the glycine cleavage system catalyzes the degradation of glycine. The P protein binds the alpha-amino group of glycine through its pyridoxal phosphate cofactor; CO(2) is released and the remaining methylamine moiety is then transferred to the lipoamide cofactor of the H protein. The chain is Probable glycine dehydrogenase (decarboxylating) subunit 1 from Maridesulfovibrio salexigens (strain ATCC 14822 / DSM 2638 / NCIMB 8403 / VKM B-1763) (Desulfovibrio salexigens).